Here is a 90-residue protein sequence, read N- to C-terminus: DNA-binding protein HU-1 (90 aa).

A Phosphothreonine modification is found at Thr-4. The tract at residues 55 to 90 is disordered; sequence RSARKGRNPQTGEEIEIPATKNPAFKPGKQLKDAVN.

The protein belongs to the bacterial histone-like protein family. As to quaternary structure, homodimer.

Functionally, histone-like DNA-binding protein which is capable of wrapping DNA to stabilize it, and thus to prevent its denaturation under extreme environmental conditions. This is DNA-binding protein HU-1 (hup1) from Halalkalibacterium halodurans (strain ATCC BAA-125 / DSM 18197 / FERM 7344 / JCM 9153 / C-125) (Bacillus halodurans).